The primary structure comprises 43 residues: Potassium channel toxin gamma-KTx 4.8 (43 aa).

Cystine bridges form between C5/C23, C11/C34, C20/C39, and C24/C41.

It belongs to the ergtoxin family. Gamma-KTx 4 subfamily. As to expression, expressed by the venom gland.

It localises to the secreted. Functionally, reversibly blocks Kv11/ERG potassium channels. This chain is Potassium channel toxin gamma-KTx 4.8, found in Centruroides elegans (Bark scorpion).